We begin with the raw amino-acid sequence, 356 residues long: Protein HEXIM1 (356 aa).

2 stretches are compositionally biased toward basic and acidic residues: residues 1–11 (MAEPLLTEHQH) and 24–47 (VHEEHTSERPPSAEERVPKEDSRW). The disordered stretch occupies residues 1-162 (MAEPLLTEHQ…RPSKKKRHWK (162 aa)). Positions 48–58 (QSRASLQSGSR) are enriched in polar residues. Residues 84-93 (SLEKGEKGQN) are compositionally biased toward basic and acidic residues. Residues S98 and S103 each carry the phosphoserine modification. Basic residues predominate over residues 145-162 (LGKKKHRRRPSKKKRHWK). The basic region; mediates nuclear localization and interaction with 7SK snRNA and NR3C1 stretch occupies residues 147-174 (KKKHRRRPSKKKRHWKPYYKLTWEEKKK). The tract at residues 199–202 (PYNT) is interaction with P-TEFb. Residues 207–247 (MDDHDQEEPDLKTGLYPKRAAAKSDDTSDEDFVEEAGEEDG) are autoinhibitory acidic region; in absence of 7SK snRNA interacts with the basic region preventing interaction with P-TEFb and modulating subcellular localization. The segment at 210–259 (HDQEEPDLKTGLYPKRAAAKSDDTSDEDFVEEAGEEDGGSDGMGGDGSEF) is disordered. Position 230 is a phosphoserine (S230). T233 carries the post-translational modification Phosphothreonine. Positions 233-248 (TSDEDFVEEAGEEDGG) are enriched in acidic residues. Phosphoserine is present on residues S234, S249, and S257. The stretch at 280–346 (SKQELIKEYL…LTENELHRQQ (67 aa)) forms a coiled coil. Residues 283 to 311 (ELIKEYLELEKCLSRKEDENNRLRLESKR) are mediates interaction with CCNT1. The required for inhibition of ESR1-dependent transcription stretch occupies residues 307-352 (LESKRLGGVDARVRELELELDRLRAENLQLLTENELHRQQERAPLS).

The protein belongs to the HEXIM family. As to quaternary structure, homooligomer and heterooligomer with HEXIM2; probably dimeric. Core component of the 7SK RNP complex, at least composed of 7SK RNA, LARP7, MEPCE, HEXIM1 (or HEXIM2) and P-TEFb (composed of CDK9 and CCNT1/cyclin-T1). Interacts with the N-CoR complex through NCOR1. Interacts with ESR1 and NR3C1. May interact with NF-kappa-B through RELA. Interacts with CCNT2; mediates formation of a tripartite complex with KPNA2. Part of the HDP-RNP complex composed of at least HEXIM1, PRKDC, XRCC5, XRCC6, paraspeckle proteins (SFPQ, NONO, PSPC1, RBM14, and MATR3) and NEAT1 non-coding RNA. Widely expressed with higher expression in heart, skeletal muscle and brain (at protein level).

The protein resides in the nucleus. It localises to the cytoplasm. Transcriptional regulator which functions as a general RNA polymerase II transcription inhibitor. Core component of the 7SK RNP complex: in cooperation with 7SK snRNA sequesters P-TEFb in a large inactive 7SK snRNP complex preventing RNA polymerase II phosphorylation and subsequent transcriptional elongation. May also regulate NF-kappa-B, ESR1, NR3C1 and CIITA-dependent transcriptional activity. Plays a role in the regulation of DNA virus-mediated innate immune response by assembling into the HDP-RNP complex, a complex that serves as a platform for IRF3 phosphorylation and subsequent innate immune response activation through the cGAS-STING pathway. This Mus musculus (Mouse) protein is Protein HEXIM1 (Hexim1).